Reading from the N-terminus, the 136-residue chain is Large ribosomal subunit protein uL16 (136 aa).

This sequence belongs to the universal ribosomal protein uL16 family. In terms of assembly, part of the 50S ribosomal subunit.

Its function is as follows. Binds 23S rRNA and is also seen to make contacts with the A and possibly P site tRNAs. The sequence is that of Large ribosomal subunit protein uL16 from Salmonella agona (strain SL483).